The following is a 181-amino-acid chain: Oligoribonuclease (181 aa).

One can recognise an Exonuclease domain in the interval 8 to 171; that stretch reads LVWLDMEMTG…ADIYESIDEL (164 aa). The active site involves Y129.

This sequence belongs to the oligoribonuclease family.

The protein resides in the cytoplasm. Functionally, 3'-to-5' exoribonuclease specific for small oligoribonucleotides. The polypeptide is Oligoribonuclease (Bordetella bronchiseptica (strain ATCC BAA-588 / NCTC 13252 / RB50) (Alcaligenes bronchisepticus)).